The chain runs to 293 residues: Nitrogenase iron protein (293 aa).

10-17 (GKGGIGKS) is a binding site for ATP. Cysteine 98 provides a ligand contact to [4Fe-4S] cluster. ADP-ribosylarginine; by dinitrogenase reductase ADP-ribosyltransferase is present on arginine 101. Position 133 (cysteine 133) interacts with [4Fe-4S] cluster.

This sequence belongs to the NifH/BchL/ChlL family. In terms of assembly, homodimer. The cofactor is [4Fe-4S] cluster. In terms of processing, the reversible ADP-ribosylation of Arg-101 inactivates the nitrogenase reductase and regulates nitrogenase activity.

The enzyme catalyses N2 + 8 reduced [2Fe-2S]-[ferredoxin] + 16 ATP + 16 H2O = H2 + 8 oxidized [2Fe-2S]-[ferredoxin] + 2 NH4(+) + 16 ADP + 16 phosphate + 6 H(+). Functionally, the key enzymatic reactions in nitrogen fixation are catalyzed by the nitrogenase complex, which has 2 components: the iron protein and the molybdenum-iron protein. The sequence is that of Nitrogenase iron protein from Klebsiella pneumoniae (strain 342).